A 311-amino-acid polypeptide reads, in one-letter code: Solute carrier family 25 member 48 (311 aa).

3 Solcar repeats span residues 3-86 (SFQL…TQRF), 101-205 (RTLS…LSEW), and 214-301 (PSPC…SLQA). 6 consecutive transmembrane segments (helical) span residues 9 to 29 (FAAG…LDTV), 61 to 81 (GMSF…GVFS), 107 to 127 (LLAS…VDLI), 189 to 209 (VPGY…ITPE), 217 to 237 (CAVW…ATPM), and 277 to 295 (ITVN…FLGY).

Belongs to the mitochondrial carrier (TC 2.A.29) family.

It is found in the mitochondrion inner membrane. This is Solute carrier family 25 member 48 (SLC25A48) from Homo sapiens (Human).